Here is a 1065-residue protein sequence, read N- to C-terminus: NLR family CARD domain-containing protein 3 (1065 aa).

Residues 1 to 10 are compositionally biased toward basic and acidic residues; the sequence is MRKQEVRTGR. A disordered region spans residues 1 to 62; that stretch reads MRKQEVRTGR…PLGPCSNDSR (62 aa). Positions 139–460 constitute an NACHT domain; sequence RVSITIGVAG…YCFTHLSLQE (322 aa). Residue 145–152 coordinates ATP; the sequence is GVAGMGKT. A TRAF6-binding motif is present at residues 457-460; sequence SLQE. LRR repeat units follow at residues 617-639, 641-663, 665-688, 693-716, 721-744, 749-772, 777-800, 805-828, 833-856, 861-884, 889-912, 917-940, 945-968, 973-996, 1001-1029, and 1031-1052; these read EANLSLSLSQGVLQSLLPQLLYC, KLRLDTNQFQDPVMELLGSVLSG, DCRIQKISLAENQISNKGAKALAR, NRSLTSLDLRGNSIGPQGAKALAD, NRTLTSLSLQGNTVRDDGARSMAE, NRTLSMLHLQKNSIGPMGAQRMAD, NRSLKELMFSSNSIGDGGAKALAE, NQGLESLDLQSNSISDAGVAALMG, NQTLLSLSLRENSISPEGAQAIAH, NSTLKNLDLTANLLHDQGARAIAV, NRTLTSLHLQWNFIQAGAAQALGQ, NRSLTSLDLQENAIGDDGACAVAR, NTALTALYLQVASIGASGAQVLGE, NRTLEILDLRGNAIGVAGAKALAN, NSSLRRLNLQENSLGMDGAICIATALSGN, and RLQHINLQGNHIGDSGARMISE.

This sequence belongs to the NLRP family. In terms of assembly, directly interacts (via CARD) with TMEM173/STING; this interaction reduces TMEM173 trafficking to the perinuclear region in response to interferon stimulatory DNA. Also interacts, but to a lesser extent, with TBK1. Interacts with TRAF6; this interaction results in decreased TRAF6 'Lys-63'-linked polyubiquitination, but leaves 'Lys-48'-linked chains unchanged, promoting TRAF6 protein degradation. Interacts with PIK3R1/PIK3R2; this interaction disrupts the association between PIK3R1/PIK3R2 and the p110 catalytic subunit PIK3CA/PIK3CB/PIK3CD and reduces PIK3R1/PIK3R2 activation. Weakly interacts with PYCARD/ASC. Interacts with CASP1 and CASP5.

The protein localises to the cytoplasm. In terms of biological role, negative regulator of the innate immune response. Attenuates signaling pathways activated by Toll-like receptors (TLRs) and the DNA sensor STING/TMEM173 in response to pathogen-associated molecular patterns, such as intracellular poly(dA:dT), but not poly(I:C), or in response to DNA virus infection, including that of Herpes simplex virus 1 (HSV1). May affect TLR4 signaling by acting at the level of TRAF6 ubiquitination, decreasing the activating 'Lys-63'-linked ubiquitination and leaving unchanged the degradative 'Lys-48'-linked ubiquitination. Inhibits the PI3K-AKT-mTOR pathway possibly by directly interacting with the posphatidylinositol 3-kinase regulatory subunit p85 (PIK3R1/PIK3R2) and disrupting the association between PIK3R1/PIK3R2 and the catalytic subunit p110 (PIK3CA/PIK3CB/PIK3CD) and reducing PIK3R1/PIK3R2 activation. Via its regulation of the PI3K-AKT-mTOR pathway, controls cell proliferation, predominantly in intestinal epithelial cells. May also affect NOD1- or NOD2-mediated NF-kappa-B activation. Might also affect the inflammatory response by preventing NLRP3 inflammasome formation, CASP1 cleavage and IL1B maturation. The polypeptide is NLR family CARD domain-containing protein 3 (NLRC3) (Homo sapiens (Human)).